Here is a 483-residue protein sequence, read N- to C-terminus: Membrane-bound lytic murein transglycosylase F (483 aa).

Positions 1–18 are cleaved as a signal peptide; that stretch reads MKGLVIRISVALALLLWA. Positions 19–270 are non-LT domain; that stretch reads VDMVFPWQQI…RIEEKYFSHI (252 aa). The interval 272 to 483 is LT domain; sequence QFDYVDIKSY…IMITPQNSQD (212 aa). The active site involves E315.

In the N-terminal section; belongs to the bacterial solute-binding protein 3 family. It in the C-terminal section; belongs to the transglycosylase Slt family.

It localises to the cell outer membrane. It catalyses the reaction Exolytic cleavage of the (1-&gt;4)-beta-glycosidic linkage between N-acetylmuramic acid (MurNAc) and N-acetylglucosamine (GlcNAc) residues in peptidoglycan, from either the reducing or the non-reducing ends of the peptidoglycan chains, with concomitant formation of a 1,6-anhydrobond in the MurNAc residue.. Its function is as follows. Murein-degrading enzyme that degrades murein glycan strands and insoluble, high-molecular weight murein sacculi, with the concomitant formation of a 1,6-anhydromuramoyl product. Lytic transglycosylases (LTs) play an integral role in the metabolism of the peptidoglycan (PG) sacculus. Their lytic action creates space within the PG sacculus to allow for its expansion as well as for the insertion of various structures such as secretion systems and flagella. This chain is Membrane-bound lytic murein transglycosylase F, found in Actinobacillus succinogenes (strain ATCC 55618 / DSM 22257 / CCUG 43843 / 130Z).